The sequence spans 442 residues: Serine--tRNA ligase (442 aa).

Residue 244–246 (TAE) coordinates L-serine. Residue 275–277 (RAE) coordinates ATP. E298 is an L-serine binding site. An ATP-binding site is contributed by 365–368 (EISS). S400 lines the L-serine pocket.

The protein belongs to the class-II aminoacyl-tRNA synthetase family. Type-1 seryl-tRNA synthetase subfamily. Homodimer. The tRNA molecule binds across the dimer.

It localises to the cytoplasm. It catalyses the reaction tRNA(Ser) + L-serine + ATP = L-seryl-tRNA(Ser) + AMP + diphosphate + H(+). The catalysed reaction is tRNA(Sec) + L-serine + ATP = L-seryl-tRNA(Sec) + AMP + diphosphate + H(+). The protein operates within aminoacyl-tRNA biosynthesis; selenocysteinyl-tRNA(Sec) biosynthesis; L-seryl-tRNA(Sec) from L-serine and tRNA(Sec): step 1/1. In terms of biological role, catalyzes the attachment of serine to tRNA(Ser). Is also able to aminoacylate tRNA(Sec) with serine, to form the misacylated tRNA L-seryl-tRNA(Sec), which will be further converted into selenocysteinyl-tRNA(Sec). The protein is Serine--tRNA ligase of Bradyrhizobium sp. (strain ORS 278).